Reading from the N-terminus, the 176-residue chain is Inorganic pyrophosphatase (176 aa).

The substrate site is built by K30, R44, and Y56. Positions 66, 71, and 103 each coordinate Mg(2+). Y140 contributes to the substrate binding site.

Belongs to the PPase family. In terms of assembly, homohexamer. The cofactor is Mg(2+).

The protein resides in the cytoplasm. It carries out the reaction diphosphate + H2O = 2 phosphate + H(+). Functionally, catalyzes the hydrolysis of inorganic pyrophosphate (PPi) forming two phosphate ions. The protein is Inorganic pyrophosphatase of Methanothermobacter thermautotrophicus (strain ATCC 29096 / DSM 1053 / JCM 10044 / NBRC 100330 / Delta H) (Methanobacterium thermoautotrophicum).